A 201-amino-acid polypeptide reads, in one-letter code: FMN-dependent NADH:quinone oxidoreductase (201 aa).

Residues serine 10, 16 to 18 (SQS), 96 to 99 (MYNF), and 140 to 143 (SRGG) contribute to the FMN site.

The protein belongs to the azoreductase type 1 family. As to quaternary structure, homodimer. Requires FMN as cofactor.

It carries out the reaction 2 a quinone + NADH + H(+) = 2 a 1,4-benzosemiquinone + NAD(+). The catalysed reaction is N,N-dimethyl-1,4-phenylenediamine + anthranilate + 2 NAD(+) = 2-(4-dimethylaminophenyl)diazenylbenzoate + 2 NADH + 2 H(+). Functionally, quinone reductase that provides resistance to thiol-specific stress caused by electrophilic quinones. In terms of biological role, also exhibits azoreductase activity. Catalyzes the reductive cleavage of the azo bond in aromatic azo compounds to the corresponding amines. The chain is FMN-dependent NADH:quinone oxidoreductase from Escherichia coli O6:K15:H31 (strain 536 / UPEC).